A 265-amino-acid polypeptide reads, in one-letter code: Iron(3+)-hydroxamate import ATP-binding protein FhuC (265 aa).

One can recognise an ABC transporter domain in the interval F12 to P248. ATP is bound by residues G44–S51 and C168–D179.

Belongs to the ABC transporter superfamily. Iron (Fe3+)-hydroxamate importer (TC 3.A.1.14.7) family. In terms of assembly, the complex is composed of two ATP-binding proteins (FhuC), a transmembrane protein (FhuB) and a solute-binding protein (FhuD). FhuC interacts with FhuB.

The protein resides in the cell inner membrane. The enzyme catalyses ATP + H2O + Fe(3+)-hydroxamate complex-[hydroxamate-binding protein]Side 1 = ADP + phosphate + Fe(3+)-hydroxamate complexSide 2 + [hydroxamate-binding protein]Side 1.. ATPase activity is inhibited by vanadate. Its function is as follows. Part of the ABC transporter complex FhuCDB involved in iron(3+)-hydroxamate import. Responsible for energy coupling to the transport system. This chain is Iron(3+)-hydroxamate import ATP-binding protein FhuC (fhuC), found in Escherichia coli (strain K12).